A 105-amino-acid polypeptide reads, in one-letter code: UPF0122 protein OB1530 (105 aa).

Belongs to the UPF0122 family.

Functionally, might take part in the signal recognition particle (SRP) pathway. This is inferred from the conservation of its genetic proximity to ftsY/ffh. May be a regulatory protein. The chain is UPF0122 protein OB1530 from Oceanobacillus iheyensis (strain DSM 14371 / CIP 107618 / JCM 11309 / KCTC 3954 / HTE831).